The following is a 71-amino-acid chain: Small ribosomal subunit protein bS21 (71 aa).

The span at 48-59 (KAAAAVKRHAKK) shows a compositional bias: basic residues. Residues 48–71 (KAAAAVKRHAKKVQREQRRRERLY) are disordered. Positions 60–71 (VQREQRRRERLY) are enriched in basic and acidic residues.

The protein belongs to the bacterial ribosomal protein bS21 family.

In Azotobacter vinelandii (strain DJ / ATCC BAA-1303), this protein is Small ribosomal subunit protein bS21.